The primary structure comprises 126 residues: Actin-depolymerizing factor (126 aa).

The region spanning 1–126 (EDNCKLKFLE…SFDIIKSRAL (126 aa)) is the ADF-H domain.

It belongs to the actin-binding proteins ADF family. As to expression, preferentially in mature anther.

Functionally, actin-depolymerizing protein. Severs actin filaments (F-actin) and binds to actin monomers. In Brassica napus (Rape), this protein is Actin-depolymerizing factor.